The sequence spans 274 residues: 2-dehydro-3-deoxyphosphooctonate aldolase (274 aa).

Belongs to the KdsA family.

The protein resides in the cytoplasm. The catalysed reaction is D-arabinose 5-phosphate + phosphoenolpyruvate + H2O = 3-deoxy-alpha-D-manno-2-octulosonate-8-phosphate + phosphate. It participates in carbohydrate biosynthesis; 3-deoxy-D-manno-octulosonate biosynthesis; 3-deoxy-D-manno-octulosonate from D-ribulose 5-phosphate: step 2/3. Its pathway is bacterial outer membrane biogenesis; lipopolysaccharide biosynthesis. In Rickettsia peacockii (strain Rustic), this protein is 2-dehydro-3-deoxyphosphooctonate aldolase.